The following is a 36-amino-acid chain: Photosystem I reaction center subunit VIII (36 aa).

The chain crosses the membrane as a helical span at residues 1 to 21 (MITFSFPSIFVPLVGLVFPAI).

This sequence belongs to the PsaI family.

Its subcellular location is the plastid. The protein localises to the chloroplast thylakoid membrane. Its function is as follows. May help in the organization of the PsaL subunit. In Coffea arabica (Arabian coffee), this protein is Photosystem I reaction center subunit VIII.